The sequence spans 231 residues: MNNIQKGIKEDFGIEFANQDLLLEAFTQGNYLNEHPEEKGRDYQRLEFLGDSVMQLIVADYLFTRYPAWEEGQLTEMRIAMVQSKSFSHFARLAGFNRYIRLGKGEELSGARNRDSLLEDIWEAFIGALYKDQGAKAVFTFLNKAFFPAIDEGFFEEFIDYKSKLQELLQKAGSVDIEYKVENEDLSDPQKPHFEVTVFVNDKAIGSGSGRSIKIAEKRAAKKAYQDVTPR.

The RNase III domain maps to 5–134 (QKGIKEDFGI…FIGALYKDQG (130 aa)). Glutamate 47 is a Mg(2+) binding site. Aspartate 51 is a catalytic residue. Positions 120 and 123 each coordinate Mg(2+). The active site involves glutamate 123. The DRBM domain occupies 160–230 (DYKSKLQELL…AKKAYQDVTP (71 aa)).

Belongs to the ribonuclease III family. As to quaternary structure, homodimer. The cofactor is Mg(2+).

The protein resides in the cytoplasm. The catalysed reaction is Endonucleolytic cleavage to 5'-phosphomonoester.. Functionally, digests double-stranded RNA. Involved in the processing of primary rRNA transcript to yield the immediate precursors to the large and small rRNAs (23S and 16S). Processes some mRNAs, and tRNAs when they are encoded in the rRNA operon. Processes pre-crRNA and tracrRNA of type II CRISPR loci if present in the organism. This Oenococcus oeni (strain ATCC BAA-331 / PSU-1) protein is Ribonuclease 3.